A 963-amino-acid polypeptide reads, in one-letter code: Iron-responsive element-binding protein 2 (963 aa).

[4Fe-4S] cluster contacts are provided by C512, C578, and C581.

Belongs to the aconitase/IPM isomerase family. As to quaternary structure, interacts with RBCK1 isoform 1 and isoform 2 only in iron-rich conditions. Interacts (when associated with the 4Fe-4S) with FBXL5. Interacts with CIAO1 and CIAO2A. [4Fe-4S] cluster serves as cofactor. Ubiquitinated and degraded by the proteasome in presence of high level of iron and oxygen. Ubiquitinated by a SCF complex containing FBXL5. Upon iron and oxygen depletion FBXL5 is degraded, preventing ubiquitination and allowing its RNA-binding activity.

The protein localises to the cytoplasm. In terms of biological role, RNA-binding protein that binds to iron-responsive elements (IRES), which are stem-loop structures found in the 5'-UTR of ferritin, and delta aminolevulinic acid synthase mRNAs, and in the 3'-UTR of transferrin receptor mRNA. Binding to the IRE element in ferritin results in the repression of its mRNA translation. Binding of the protein to the transferrin receptor mRNA inhibits the degradation of this otherwise rapidly degraded mRNA. This Homo sapiens (Human) protein is Iron-responsive element-binding protein 2 (IREB2).